We begin with the raw amino-acid sequence, 264 residues long: TLC domain-containing protein 2 (264 aa).

6 consecutive transmembrane segments (helical) span residues 3–23, 42–62, 77–97, 114–134, 169–189, and 199–219; these read PTGL…HWGL, LCVS…GLSL, WALV…ADLL, VVVS…FSMV, SLAT…LWLF, and LVTL…ILGI. The region spanning 34–227 is the TLC domain; that stretch reads RDRWQWWNLC…GIRILVNDVL (194 aa). Residues 230-264 are disordered; sequence RPHPPSPGHEKTRGTRTRRDNGPVTSNSSTLSLKD. Residues 237 to 250 show a composition bias toward basic and acidic residues; the sequence is GHEKTRGTRTRRDN. Residues 252–264 show a composition bias toward polar residues; that stretch reads PVTSNSSTLSLKD.

The protein belongs to the TLCD family.

It localises to the cell membrane. Regulates the composition and fluidity of the plasma membrane. Inhibits the incorporation of membrane-fluidizing phospholipids containing omega-3 long-chain polyunsaturated fatty acids (LCPUFA) and thereby promotes membrane rigidity. Does not appear to have any effect on LCPUFA synthesis. This is TLC domain-containing protein 2 (TLCD2) from Homo sapiens (Human).